A 241-amino-acid polypeptide reads, in one-letter code: Proteasome subunit beta type-6 (241 aa).

The propeptide occupies 1–19 (MATIASEYSSEASNTPIEH).

This sequence belongs to the peptidase T1B family. In terms of assembly, the 26S proteasome consists of a 20S proteasome core and two 19S regulatory subunits. The 20S proteasome core is composed of 28 subunits that are arranged in four stacked rings, resulting in a barrel-shaped structure. The two end rings are each formed by seven alpha subunits, and the two central rings are each formed by seven beta subunits. The catalytic chamber with the active sites is on the inside of the barrel.

Its subcellular location is the cytoplasm. It localises to the nucleus. Functionally, non-catalytic component of the proteasome which degrades poly-ubiquitinated proteins in the cytoplasm and in the nucleus. It is essential for the regulated turnover of proteins and for the removal of misfolded proteins. The proteasome is a multicatalytic proteinase complex that is characterized by its ability to cleave peptides with Arg, Phe, Tyr, Leu, and Glu adjacent to the leaving group at neutral or slightly basic pH. It has an ATP-dependent proteolytic activity. This Saccharomyces cerevisiae (strain ATCC 204508 / S288c) (Baker's yeast) protein is Proteasome subunit beta type-6 (PRE7).